The sequence spans 138 residues: Probable phospholipase A2 homolog 1 (138 aa).

Residues 1 to 21 (MPPRSPLLALVFLAAGVLSSA) form the signal peptide. Disulfide bonds link Cys-29–Cys-56, Cys-33–Cys-62, Cys-38–Cys-109, Cys-49–Cys-69, Cys-68–Cys-93, and Cys-75–Cys-86. Residues Tyr-48, Gly-50, and Trp-53 each coordinate Ca(2+). The active site involves His-72. Asp-73 lines the Ca(2+) pocket.

Belongs to the phospholipase A2 family. Ca(2+) is required as a cofactor.

It is found in the secreted. The enzyme catalyses a 1,2-diacyl-sn-glycero-3-phosphocholine + H2O = a 1-acyl-sn-glycero-3-phosphocholine + a fatty acid + H(+). PA2 catalyzes the calcium-dependent hydrolysis of the 2-acyl groups in 3-sn-phosphoglycerides. Releases lysophospholipids (LPLs) and free fatty acids (FFAs) from membrane phospholipids in response to hormones and other external stimuli. The sequence is that of Probable phospholipase A2 homolog 1 (PLA2-I) from Oryza sativa subsp. japonica (Rice).